A 128-amino-acid chain; its full sequence is Glycine cleavage system H protein (128 aa).

The Lipoyl-binding domain occupies 24–106; that stretch reads VFCVGITDHA…YDEGWLFRIR (83 aa). Lys-65 is subject to N6-lipoyllysine.

This sequence belongs to the GcvH family. As to quaternary structure, the glycine cleavage system is composed of four proteins: P, T, L and H. It depends on (R)-lipoate as a cofactor.

Its function is as follows. The glycine cleavage system catalyzes the degradation of glycine. The H protein shuttles the methylamine group of glycine from the P protein to the T protein. In Edwardsiella ictaluri (strain 93-146), this protein is Glycine cleavage system H protein.